The sequence spans 246 residues: Type III pantothenate kinase (246 aa).

An ATP-binding site is contributed by aspartate 6 to lysine 13. Substrate-binding positions include tyrosine 93 and glycine 100 to arginine 103. Aspartate 102 acts as the Proton acceptor in catalysis. Residue threonine 125 coordinates ATP. Threonine 175 provides a ligand contact to substrate.

It belongs to the type III pantothenate kinase family. Homodimer. Requires NH4(+) as cofactor. K(+) is required as a cofactor.

The protein localises to the cytoplasm. The catalysed reaction is (R)-pantothenate + ATP = (R)-4'-phosphopantothenate + ADP + H(+). It functions in the pathway cofactor biosynthesis; coenzyme A biosynthesis; CoA from (R)-pantothenate: step 1/5. Its function is as follows. Catalyzes the phosphorylation of pantothenate (Pan), the first step in CoA biosynthesis. In Dichelobacter nodosus (strain VCS1703A), this protein is Type III pantothenate kinase.